Reading from the N-terminus, the 190-residue chain is Anthranilate synthase component 2 (190 aa).

In terms of domain architecture, Glutamine amidotransferase type-1 spans Met1–Asn190. Position 52-54 (Cys52–Gly54) interacts with L-glutamine. The Nucleophile; for GATase activity role is filled by Cys79. L-glutamine is bound by residues Gln83 and Ser129–Leu130. Catalysis depends on residues His169 and Glu171.

Tetramer of two components I and two components II.

Its subcellular location is the plastid. It is found in the cyanelle. The enzyme catalyses chorismate + L-glutamine = anthranilate + pyruvate + L-glutamate + H(+). It functions in the pathway amino-acid biosynthesis; L-tryptophan biosynthesis; L-tryptophan from chorismate: step 1/5. This is Anthranilate synthase component 2 (trpG) from Cyanophora paradoxa.